A 275-amino-acid chain; its full sequence is Large ribosomal subunit protein uL2 (275 aa).

Disordered regions lie at residues 28–59 and 224–275; these read KPYA…GGHK and AMNP…RHKR. The segment covering 35–46 has biased composition (polar residues); the sequence is DTQSSTAGRNNN. Residues 50 to 59 are compositionally biased toward basic residues; the sequence is TTRHKGGGHK.

This sequence belongs to the universal ribosomal protein uL2 family. In terms of assembly, part of the 50S ribosomal subunit. Forms a bridge to the 30S subunit in the 70S ribosome.

In terms of biological role, one of the primary rRNA binding proteins. Required for association of the 30S and 50S subunits to form the 70S ribosome, for tRNA binding and peptide bond formation. It has been suggested to have peptidyltransferase activity; this is somewhat controversial. Makes several contacts with the 16S rRNA in the 70S ribosome. In Paraburkholderia phymatum (strain DSM 17167 / CIP 108236 / LMG 21445 / STM815) (Burkholderia phymatum), this protein is Large ribosomal subunit protein uL2.